Reading from the N-terminus, the 429-residue chain is 3-phosphoshikimate 1-carboxyvinyltransferase (429 aa).

3-phosphoshikimate contacts are provided by Lys21, Ser22, and Arg26. Lys21 serves as a coordination point for phosphoenolpyruvate. Residues Gly94 and Arg122 each contribute to the phosphoenolpyruvate site. 4 residues coordinate 3-phosphoshikimate: Ser167, Gln169, Asp315, and Lys342. Residue Gln169 coordinates phosphoenolpyruvate. Asp315 serves as the catalytic Proton acceptor. Phosphoenolpyruvate-binding residues include Arg346 and Arg388.

This sequence belongs to the EPSP synthase family. As to quaternary structure, monomer.

It is found in the cytoplasm. The enzyme catalyses 3-phosphoshikimate + phosphoenolpyruvate = 5-O-(1-carboxyvinyl)-3-phosphoshikimate + phosphate. Its pathway is metabolic intermediate biosynthesis; chorismate biosynthesis; chorismate from D-erythrose 4-phosphate and phosphoenolpyruvate: step 6/7. In terms of biological role, catalyzes the transfer of the enolpyruvyl moiety of phosphoenolpyruvate (PEP) to the 5-hydroxyl of shikimate-3-phosphate (S3P) to produce enolpyruvyl shikimate-3-phosphate and inorganic phosphate. The polypeptide is 3-phosphoshikimate 1-carboxyvinyltransferase (Desulforamulus reducens (strain ATCC BAA-1160 / DSM 100696 / MI-1) (Desulfotomaculum reducens)).